The following is a 1790-amino-acid chain: Intracellular protein transport protein USO1 (1790 aa).

The segment at 1 to 724 (MDIIQGLIQQ…LSHDPDEEPI (724 aa)) is globular head. ARM repeat units follow at residues 45-89 (AFSR…LFIR), 127-170 (QFSL…AVMA), 173-213 (PLKA…MAVV), 215-260 (DSPH…NILK), 261-312 (YNTS…VSLT), 314-362 (EPGN…NMVR), 363-429 (SNEH…LKAY), 431-512 (MDNF…PFKL), 543-584 (GNDL…LIYW), and 586-630 (FGDF…LGVA). A disordered region spans residues 452–484 (TNNVGDNAKENGGSNKSDKESDSDKDTDGKDGT). Positions 465 to 487 (SNKSDKESDSDKDTDGKDGTEYE) are charged (hyper-hydrophilic). The span at 467–484 (KSDKESDSDKDTDGKDGT) shows a compositional bias: basic and acidic residues. A coiled-coil region spans residues 725–1790 (NKISFEEVEK…EEDEEEGQVA (1066 aa)). The dispensable for the protein function stretch occupies residues 991–1790 (ESSIQLSNLQ…EEDEEEGQVA (800 aa)). Disordered stretches follow at residues 1185 to 1221 (EITSTQQENESIKKKNDELEGEVKAMKSTSEEQSNLK), 1326 to 1351 (KEKSESELSRLKKTSSEERKNAEEQL), 1485 to 1547 (GLKK…EDIK), 1645 to 1667 (QELDSTQQKAQKSEEERRAEVRK), 1722 to 1742 (DNLKAENSKLKEANEDRSEID), and 1762 to 1790 (LKDLGVEISSDEEDDEEDDEEDEEEGQVA). The segment covering 1194–1209 (ESIKKKNDELEGEVKA) has biased composition (basic and acidic residues). Composition is skewed to basic and acidic residues over residues 1485-1512 (GLKKLEEESSKEKAELEKSKEMMKKLES), 1519-1547 (TELKSSMETIRKSDEKLEQSKKSAEEDIK), 1655-1667 (QKSEEERRAEVRK), and 1722-1738 (DNLKAENSKLKEANEDR). At Ser-1770 the chain carries Phosphoserine. Residues 1770–1790 (SSDEEDDEEDDEEDEEEGQVA) show a composition bias toward acidic residues.

The protein belongs to the VDP/USO1/EDE1 family. As to quaternary structure, homodimer. Dimerizes by parallel association of the tails, resulting in an elongated structure with two globular head domains side by side, and a long rod-like tail structure.

The protein resides in the cytoplasm. It is found in the cytoskeleton. It localises to the cytoplasmic vesicle membrane. Its subcellular location is the endoplasmic reticulum membrane. The protein localises to the golgi apparatus membrane. Its function is as follows. Required for protein transport from the ER to the Golgi complex. This Saccharomyces cerevisiae (strain ATCC 204508 / S288c) (Baker's yeast) protein is Intracellular protein transport protein USO1 (USO1).